We begin with the raw amino-acid sequence, 118 residues long: Co-chaperonin GroES (118 aa).

It belongs to the GroES chaperonin family. As to quaternary structure, heptamer of 7 subunits arranged in a ring. Interacts with the chaperonin GroEL.

The protein resides in the cytoplasm. Its function is as follows. Together with the chaperonin GroEL, plays an essential role in assisting protein folding. The GroEL-GroES system forms a nano-cage that allows encapsulation of the non-native substrate proteins and provides a physical environment optimized to promote and accelerate protein folding. GroES binds to the apical surface of the GroEL ring, thereby capping the opening of the GroEL channel. This Helicobacter acinonychis (strain Sheeba) protein is Co-chaperonin GroES.